The following is a 1492-amino-acid chain: DNA-directed RNA polymerase subunit beta' (1492 aa).

Residues Cys-67, Cys-69, Cys-82, and Cys-85 each contribute to the Zn(2+) site. Positions 499, 501, and 503 each coordinate Mg(2+). Zn(2+) contacts are provided by Cys-867, Cys-943, Cys-950, and Cys-953.

This sequence belongs to the RNA polymerase beta' chain family. The RNAP catalytic core consists of 2 alpha, 1 beta, 1 beta' and 1 omega subunit. When a sigma factor is associated with the core the holoenzyme is formed, which can initiate transcription. Mg(2+) is required as a cofactor. Requires Zn(2+) as cofactor.

The enzyme catalyses RNA(n) + a ribonucleoside 5'-triphosphate = RNA(n+1) + diphosphate. In terms of biological role, DNA-dependent RNA polymerase catalyzes the transcription of DNA into RNA using the four ribonucleoside triphosphates as substrates. This chain is DNA-directed RNA polymerase subunit beta', found in Chlorobium phaeobacteroides (strain DSM 266 / SMG 266 / 2430).